The primary structure comprises 134 residues: ATP synthase epsilon chain (134 aa).

It belongs to the ATPase epsilon chain family. F-type ATPases have 2 components, CF(1) - the catalytic core - and CF(0) - the membrane proton channel. CF(1) has five subunits: alpha(3), beta(3), gamma(1), delta(1), epsilon(1). CF(0) has three main subunits: a, b and c.

It is found in the cell inner membrane. In terms of biological role, produces ATP from ADP in the presence of a proton gradient across the membrane. This is ATP synthase epsilon chain from Syntrophobacter fumaroxidans (strain DSM 10017 / MPOB).